The chain runs to 84 residues: uncharacterized protein (84 aa).

An HTH cro/C1-type domain is found at 7–62 (IDVMLAKRKMSVTELSERVGITMANLSILKNGKAKAIRLSTLEAICKALECQPGDI). The segment at residues 18 to 37 (VTELSERVGITMANLSILKN) is a DNA-binding region (H-T-H motif).

This is an uncharacterized protein from Bacillus subtilis (strain 168).